Here is a 539-residue protein sequence, read N- to C-terminus: Phosphoenolpyruvate carboxykinase (ATP) (539 aa).

Substrate contacts are provided by R64, Y206, and K212. Residues K212, H231, and 247 to 255 (GLSGTGKTT) contribute to the ATP site. Residues K212 and H231 each contribute to the Mn(2+) site. Position 268 (D268) interacts with Mn(2+). ATP contacts are provided by residues E296, R332, 448 to 449 (RI), and T454. R332 lines the substrate pocket.

Belongs to the phosphoenolpyruvate carboxykinase (ATP) family. Monomer. The cofactor is Mn(2+).

It localises to the cytoplasm. It carries out the reaction oxaloacetate + ATP = phosphoenolpyruvate + ADP + CO2. It participates in carbohydrate biosynthesis; gluconeogenesis. Functionally, involved in the gluconeogenesis. Catalyzes the conversion of oxaloacetate (OAA) to phosphoenolpyruvate (PEP) through direct phosphoryl transfer between the nucleoside triphosphate and OAA. The sequence is that of Phosphoenolpyruvate carboxykinase (ATP) from Salmonella choleraesuis (strain SC-B67).